Here is a 487-residue protein sequence, read N- to C-terminus: UDP-glycosyltransferase 72E1 (487 aa).

The active-site Proton acceptor is His18. His18 lines the an anthocyanidin pocket. Residue Asp116 is the Charge relay of the active site. UDP-alpha-D-glucose-binding residues include Ala351, Gln353, His368, Trp371, Asn372, Ser373, and Glu376. Ala391 contributes to the an anthocyanidin binding site. Glu392 and Gln393 together coordinate UDP-alpha-D-glucose.

This sequence belongs to the UDP-glycosyltransferase family. In terms of assembly, interacts with SIS8. As to expression, expressed in seedlings, roots and leaves.

It is found in the nucleus. It carries out the reaction (E)-coniferaldehyde + UDP-alpha-D-glucose = 4-O-(beta-D-glucosyl)-4-(E)-coniferyl aldehyde + UDP + H(+). It catalyses the reaction (E)-sinapaldehyde + UDP-alpha-D-glucose = 4-O-(beta-D-glucosyl)-4-trans-sinapoyl aldehyde + UDP + H(+). UDP-glycosyltransferase that glucosylates coniferyl aldehyde to form coniferyl aldehyde 4-O-glucoside. Glucosylates sinapyl aldehyde to form sinapyl aldehyde 4-O-glucoside. Is not active in presence of coniferyl alcohol or sinapyl alcohol. Can glucosylate the phytotoxic xenobiotic compound 2,4,5-trichlorophenol (TCP). This Arabidopsis thaliana (Mouse-ear cress) protein is UDP-glycosyltransferase 72E1.